A 548-amino-acid polypeptide reads, in one-letter code: Membrane protein insertase YidC (548 aa).

Residues 6-26 (NLLVIALLFVSFMIWQAWEQD) form a helical membrane-spanning segment. Residues 28–55 (NPQPQAQQTTQTTTTAAGSAADQGVPAS) are disordered. The span at 30 to 50 (QPQAQQTTQTTTTAAGSAADQ) shows a compositional bias: low complexity. 4 consecutive transmembrane segments (helical) span residues 350 to 370 (FVGNWGFSIIIITFIVRGIMY), 420 to 440 (LGGCFPLLIQMPIFLALYYML), 458 to 478 (LSAQDPYYILPILMGVTMFFI), and 499 to 519 (PVIFTVFFLWFPSGLVLYYIV).

It belongs to the OXA1/ALB3/YidC family. Type 1 subfamily. In terms of assembly, interacts with the Sec translocase complex via SecD. Specifically interacts with transmembrane segments of nascent integral membrane proteins during membrane integration.

The protein resides in the cell inner membrane. In terms of biological role, required for the insertion and/or proper folding and/or complex formation of integral membrane proteins into the membrane. Involved in integration of membrane proteins that insert both dependently and independently of the Sec translocase complex, as well as at least some lipoproteins. Aids folding of multispanning membrane proteins. The protein is Membrane protein insertase YidC of Escherichia fergusonii (strain ATCC 35469 / DSM 13698 / CCUG 18766 / IAM 14443 / JCM 21226 / LMG 7866 / NBRC 102419 / NCTC 12128 / CDC 0568-73).